A 425-amino-acid chain; its full sequence is tRNA (guanine-N(7)-)-methyltransferase non-catalytic subunit wuho (425 aa).

A disordered region spans residues 67-102; that stretch reads ATCAGKEPGGKEQQLTKQPEEGGTTASGSGVTSTSV. Positions 88–102 are enriched in low complexity; the sequence is GGTTASGSGVTSTSV. WD repeat units follow at residues 97-138, 142-181, 185-224, 228-266, and 325-365; these read VTST…ARLL, PLARAASAVRFCSDSSSVLVTDKTGDCYQYDCVELEAPPR, GHLSVVYDILWSEDQQHIITCDRDDKIRVTNYPATFDIHS, GHREFVSGLALLTDKHIASASGDKTLRVWNYIQGKELLQ, and AGSW…PATS.

It belongs to the WD repeat TRM82 family. In terms of assembly, forms a heterodimer with the catalytic subunit Mettl1. Interacts with mei-P26 and weakly interacts with bgcn; required for the function or formation of the mei-P26-bgcn-bam-sxl complex. Interacts with nanos; may be involved in mei-P26-dependent derepression of the BMP signaling pathway. Interacts with Myc; the interaction may be mediated by mei-P26 and may be involved in the regulation of ribosome biogenesis. As to expression, in testis, it is present at high level in hub cells, a niche for germline stem cells of testis. Ubiquitously expressed in all testicular cells throughout spermatogenesis. Ubiquitously expressed in all germline and somatic cells of the ovary.

Its subcellular location is the nucleus. It is found in the cytoplasm. Its pathway is tRNA modification; N(7)-methylguanine-tRNA biosynthesis. Functionally, required for the Mettl1-dependent formation of N(7)-methylguanine at position 46 (m7G46) in tRNA. In the Mettl1-wuho methyltransferase complex, it is required to stabilize and induce conformational changes of the catalytic subunit. Required for binding of nanos mRNA and repression of translation by the mei-P26-bgcn-bam-sxl complex. May cooperate with mei-P26 and nanos to derepress the BMP signaling pathway. May cooperate with mei-P26 to suppress expression of a subset of microRNAs. May cooperate with mei-P26 to regulate bam expression levels in germline cells during gametogenesis. Required to promote mitosis to meiosis transition during gametogenesis. May regulate germline cell division in part by regulating ribosome biogenesis. The polypeptide is tRNA (guanine-N(7)-)-methyltransferase non-catalytic subunit wuho (Drosophila yakuba (Fruit fly)).